The primary structure comprises 321 residues: Probable arabinan endo-1,5-alpha-L-arabinosidase C (321 aa).

Residues M1–A18 form the signal peptide. D33 functions as the Proton acceptor in the catalytic mechanism. N192 carries N-linked (GlcNAc...) asparagine glycosylation. Catalysis depends on E200, which acts as the Proton donor. N224 is a glycosylation site (N-linked (GlcNAc...) asparagine).

This sequence belongs to the glycosyl hydrolase 43 family.

It localises to the secreted. It carries out the reaction Endohydrolysis of (1-&gt;5)-alpha-arabinofuranosidic linkages in (1-&gt;5)-arabinans.. It participates in glycan metabolism; L-arabinan degradation. In terms of biological role, endo-1,5-alpha-L-arabinanase involved in degradation of pectin. Its preferred substrate is linear 1,5-alpha-L-arabinan. This is Probable arabinan endo-1,5-alpha-L-arabinosidase C (abnC) from Aspergillus fumigatus (strain ATCC MYA-4609 / CBS 101355 / FGSC A1100 / Af293) (Neosartorya fumigata).